The primary structure comprises 327 residues: MSLTSDIKQELAQVHVAKNSVRAAEVSAILRFAGEMQAVGGKLVIEANLDSMQVGMRLQEFIQGLYNSRVDVHTVNPTVSRKTPRYLVRIIDNADEIARRTGLVTRSGHVVKGLAPSVVSGTISDAEAAWRGAFLANGSLSDPGRSSSLEVLCPGQESALALVGCARRIGIAAKTKDSRGFDRVNVRDAEAIGALLTRMGAQKTRMLWEEKRIKRESRTPANRLANFDDANLRRSARAAVAAAARVERAMKILGDDVPEHLAEAGQLRVQHRQASLEELGRLADPQMTKDAVAGRIRRLLTMADKRAEDLKIPDTNSVVTEDLLEEI.

A DNA-binding region (H-T-H motif) is located at residues 275 to 308 (SLEELGRLADPQMTKDAVAGRIRRLLTMADKRAE).

It belongs to the WhiA family.

Functionally, involved in cell division and chromosome segregation. The sequence is that of Probable cell division protein WhiA from Corynebacterium glutamicum (strain ATCC 13032 / DSM 20300 / JCM 1318 / BCRC 11384 / CCUG 27702 / LMG 3730 / NBRC 12168 / NCIMB 10025 / NRRL B-2784 / 534).